The following is a 410-amino-acid chain: YYTPDYDTKDTDILAAFRMTPQPGVPPEEAGAAGAAESSTGTWTTVWTDGLTSLDRYKGRCHDIEPVAGEVNQYIAYVAYPLDLFEEGSVTNMFTSIVGNVFGFKALRALRLEDLRIPPAYSKTFIGPPHGIQVERDKLNKYGRPLLGCTIKPKLGLSAKNYGRAVYECLRGGLDFTKDDENVNSQPFMRWRDRFLFVAEALFKAQAETGEIKGHYLNATAGTCEEMLKRAIFARELGAPIVMHDYLTGGFTANTSLAFYCRDNGLLLHIHRAMHAVIDRQRNHGIHFRVLAKALRMSGGDHIHAGTVVGKLEGEREVTLGFVDLLRDDYIEKDRSRGIYFTQDWVSMPGVLPVASGGIHVWHMPALTEIFGDDSVLQFGGGTLGHPWGNAPGAVANRVALEACVQARNE.

Substrate is bound by residues Asn100 and Thr150. Lys152 (proton acceptor) is an active-site residue. Lys154 lines the substrate pocket. Mg(2+) contacts are provided by Lys178, Asp180, and Glu181. Lys178 is subject to N6-carboxylysine. The Proton acceptor role is filled by His271. Residues Arg272, His304, and Ser356 each coordinate substrate.

This sequence belongs to the RuBisCO large chain family. Type I subfamily. Heterohexadecamer of 8 large chains and 8 small chains; disulfide-linked. The disulfide link is formed within the large subunit homodimers. It depends on Mg(2+) as a cofactor. In terms of processing, the disulfide bond which can form in the large chain dimeric partners within the hexadecamer appears to be associated with oxidative stress and protein turnover.

It localises to the plastid. It is found in the chloroplast. The enzyme catalyses 2 (2R)-3-phosphoglycerate + 2 H(+) = D-ribulose 1,5-bisphosphate + CO2 + H2O. The catalysed reaction is D-ribulose 1,5-bisphosphate + O2 = 2-phosphoglycolate + (2R)-3-phosphoglycerate + 2 H(+). In terms of biological role, ruBisCO catalyzes two reactions: the carboxylation of D-ribulose 1,5-bisphosphate, the primary event in carbon dioxide fixation, as well as the oxidative fragmentation of the pentose substrate in the photorespiration process. Both reactions occur simultaneously and in competition at the same active site. This chain is Ribulose bisphosphate carboxylase large chain (rbcL), found in Gleichenia japonica (Urajiro).